A 729-amino-acid chain; its full sequence is Ran-binding protein 9 (729 aa).

The span at M1–Q11 shows a compositional bias: pro residues. The tract at residues M1–D137 is disordered. Over residues L27–G49 the composition is skewed to low complexity. A compositionally biased stretch (gly residues) spans S50–L60. Positions H70 to A93 are enriched in pro residues. Low complexity predominate over residues G107–G126. Residues L147 to F334 enclose the B30.2/SPRY domain. Residues W365 to V397 enclose the LisH domain. The tract at residues L401 to R407 is interaction with CALB1. The CTLH domain occupies S403–V460. K405 is subject to N6-acetyllysine. The interval R461–S489 is disordered. A compositionally biased stretch (low complexity) spans S473–S489. S477 and S487 each carry phosphoserine. The interval A615–H729 is interaction with FMR1.

The protein belongs to the RANBP9/10 family. Part of a complex consisting of RANBP9, MKLN1 and GID8. Identified in the CTLH complex that contains GID4, RANBP9 and/or RANBP10, MKLN1, MAEA, RMND5A (or alternatively its paralog RMND5B), GID8, ARMC8, WDR26 and YPEL5. Within this complex, MAEA, RMND5A (or alternatively its paralog RMND5B), GID8, WDR26, and RANBP9 and/or RANBP10 form the catalytic core, while GID4, MKLN1, ARMC8 and YPEL5 have ancillary roles. Interacts with GTP-bound Ran, AR, CDC2L1/p110C, CALB1, S100A7, USP11, MKLN1, SOS1 or SOS2, GID8, and FMR1. Interacts with the Dyrk kinases HIPK2, DYRK1A, and DYRK1B. Interacts with TP73 isoform Alpha but not with TP53. Interacts with the HGF receptor MET and the integrins ITGB1 and ITGB2, but not with ITGAL. Part of a complex consisting of RANBP9, RAN, DYRK1B and COPS5. Directly interacts with RANBP10. Interacts with YPEL5. Interacts with DDX4. Interacts with NGFR. Interacts with TEX19. Phosphorylated in response to stress. Can be phosphorylated by the cleaved p110 form of CDC2L1 (p110C). Post-translationally, ubiquitinated. Polyubiquitination targets the protein for rapid degradation via the ubiquitin system. Can be deubiquitinated by USP11. Ubiquitously expressed, with highest levels in testes, placenta, heart, and muscle, and lowest levels in lung. Within the brain, expressed predominantly by neurons in the gray matter of cortex, the granular layer of cerebellum and the Purkinje cells.

Its subcellular location is the cytoplasm. It is found in the nucleus. It localises to the cell membrane. Its function is as follows. May act as scaffolding protein, and as adapter protein to couple membrane receptors to intracellular signaling pathways. Acts as a mediator of cell spreading and actin cytoskeleton rearrangement. Core component of the CTLH E3 ubiquitin-protein ligase complex that selectively accepts ubiquitin from UBE2H and mediates ubiquitination and subsequent proteasomal degradation of the transcription factor HBP1. May be involved in signaling of ITGB2/LFA-1 and other integrins. Enhances HGF-MET signaling by recruiting Sos and activating the Ras pathway. Enhances dihydrotestosterone-induced transactivation activity of AR, as well as dexamethasone-induced transactivation activity of NR3C1, but not affect estrogen-induced transactivation. Stabilizes TP73 isoform Alpha, probably by inhibiting its ubiquitination, and increases its proapoptotic activity. Inhibits the kinase activity of DYRK1A and DYRK1B. Inhibits FMR1 binding to RNA. In Homo sapiens (Human), this protein is Ran-binding protein 9 (RANBP9).